We begin with the raw amino-acid sequence, 254 residues long: MIQMTLIQIDNYGPWTVTPRPRNESDLQILQAELYADLERQFANKKGLVFFTRFDNLLAVTNGIDEEDHLRIQRSIRNRYPITISMGVGAAETPHEAQKLATIALQKEGGAQSSKRKEILAIDSLAPADENNLVQAAHIDINSVTETLTDIESAFDTNFMVNKAQHYLMTKLIKKGALLFFIGGDNFMAPCNGLSEKEIEDILVEINDEIGIGLKAGIGVGRNMEDAAYMADLGLEEIRDHDNGMWTWVIEKEY.

It belongs to the archaeal-type GTP cyclohydrolase family.

It catalyses the reaction GTP + 3 H2O = 2-amino-5-formylamino-6-(5-phospho-D-ribosylamino)pyrimidin-4(3H)-one + 2 phosphate + 2 H(+). Catalyzes the formation of 2-amino-5-formylamino-6-ribofuranosylamino-4(3H)-pyrimidinone ribonucleotide monophosphate and inorganic phosphate from GTP. Also has an independent pyrophosphate phosphohydrolase activity. This chain is GTP cyclohydrolase III, found in Methanobrevibacter smithii (strain ATCC 35061 / DSM 861 / OCM 144 / PS).